The following is a 274-amino-acid chain: NADPH-dependent 7-cyano-7-deazaguanine reductase (274 aa).

80 to 82 contacts substrate; the sequence is VES. Residue 82–83 participates in NADPH binding; it reads SK. Cys181 acts as the Thioimide intermediate in catalysis. Asp188 serves as the catalytic Proton donor. 220–221 serves as a coordination point for substrate; it reads HE. Residue 249-250 participates in NADPH binding; sequence RG.

It belongs to the GTP cyclohydrolase I family. QueF type 2 subfamily. As to quaternary structure, homodimer.

The protein resides in the cytoplasm. The enzyme catalyses 7-aminomethyl-7-carbaguanine + 2 NADP(+) = 7-cyano-7-deazaguanine + 2 NADPH + 3 H(+). It participates in tRNA modification; tRNA-queuosine biosynthesis. Its function is as follows. Catalyzes the NADPH-dependent reduction of 7-cyano-7-deazaguanine (preQ0) to 7-aminomethyl-7-deazaguanine (preQ1). The protein is NADPH-dependent 7-cyano-7-deazaguanine reductase of Burkholderia ambifaria (strain ATCC BAA-244 / DSM 16087 / CCUG 44356 / LMG 19182 / AMMD) (Burkholderia cepacia (strain AMMD)).